Consider the following 378-residue polypeptide: tRNA-specific 2-thiouridylase MnmA (378 aa).

Residues 9 to 16 (GVSGGVDS) and methionine 35 contribute to the ATP site. The segment at 94–96 (NPD) is interaction with target base in tRNA. Cysteine 99 (nucleophile) is an active-site residue. Cysteine 99 and cysteine 195 are joined by a disulfide. Glycine 123 is an ATP binding site. The interval 145 to 147 (KDQ) is interaction with tRNA. Catalysis depends on cysteine 195, which acts as the Cysteine persulfide intermediate. An interaction with tRNA region spans residues 307-308 (RY).

The protein belongs to the MnmA/TRMU family.

It localises to the cytoplasm. It carries out the reaction S-sulfanyl-L-cysteinyl-[protein] + uridine(34) in tRNA + AH2 + ATP = 2-thiouridine(34) in tRNA + L-cysteinyl-[protein] + A + AMP + diphosphate + H(+). In terms of biological role, catalyzes the 2-thiolation of uridine at the wobble position (U34) of tRNA, leading to the formation of s(2)U34. The polypeptide is tRNA-specific 2-thiouridylase MnmA (Xanthomonas oryzae pv. oryzae (strain MAFF 311018)).